The sequence spans 158 residues: Ribonuclease H (158 aa).

The 142-residue stretch at 3–144 folds into the RNase H type-1 domain; sequence GLKQLLIFTD…CDTLAREAAE (142 aa). Aspartate 12, glutamate 50, aspartate 72, and aspartate 136 together coordinate Mg(2+).

This sequence belongs to the RNase H family. In terms of assembly, monomer. Mg(2+) is required as a cofactor.

It localises to the cytoplasm. The catalysed reaction is Endonucleolytic cleavage to 5'-phosphomonoester.. Its function is as follows. Endonuclease that specifically degrades the RNA of RNA-DNA hybrids. In Shewanella loihica (strain ATCC BAA-1088 / PV-4), this protein is Ribonuclease H.